The primary structure comprises 197 residues: uncharacterized protein (197 aa).

This is an uncharacterized protein from Archaeoglobus fulgidus (strain ATCC 49558 / DSM 4304 / JCM 9628 / NBRC 100126 / VC-16).